We begin with the raw amino-acid sequence, 209 residues long: Uracil phosphoribosyltransferase (209 aa).

Residues R79, R104, and 131 to 139 each bind 5-phospho-alpha-D-ribose 1-diphosphate; that span reads DPMLATGGS. Uracil is bound by residues I194 and 199-201; that span reads GDA. Position 200 (D200) interacts with 5-phospho-alpha-D-ribose 1-diphosphate.

It belongs to the UPRTase family. It depends on Mg(2+) as a cofactor.

The catalysed reaction is UMP + diphosphate = 5-phospho-alpha-D-ribose 1-diphosphate + uracil. The protein operates within pyrimidine metabolism; UMP biosynthesis via salvage pathway; UMP from uracil: step 1/1. Its activity is regulated as follows. Allosterically activated by GTP. Functionally, catalyzes the conversion of uracil and 5-phospho-alpha-D-ribose 1-diphosphate (PRPP) to UMP and diphosphate. The polypeptide is Uracil phosphoribosyltransferase (Lachnoclostridium phytofermentans (strain ATCC 700394 / DSM 18823 / ISDg) (Clostridium phytofermentans)).